The sequence spans 163 residues: NADH-quinone oxidoreductase subunit I (163 aa).

4Fe-4S ferredoxin-type domains are found at residues Leu54–Asp84 and Thr94–Ile123. Residues Cys64, Cys67, Cys70, Cys74, Cys103, Cys106, Cys109, and Cys113 each contribute to the [4Fe-4S] cluster site.

Belongs to the complex I 23 kDa subunit family. In terms of assembly, NDH-1 is composed of 14 different subunits. Subunits NuoA, H, J, K, L, M, N constitute the membrane sector of the complex. The cofactor is [4Fe-4S] cluster.

The protein localises to the cell inner membrane. The enzyme catalyses a quinone + NADH + 5 H(+)(in) = a quinol + NAD(+) + 4 H(+)(out). Functionally, NDH-1 shuttles electrons from NADH, via FMN and iron-sulfur (Fe-S) centers, to quinones in the respiratory chain. The immediate electron acceptor for the enzyme in this species is believed to be ubiquinone. Couples the redox reaction to proton translocation (for every two electrons transferred, four hydrogen ions are translocated across the cytoplasmic membrane), and thus conserves the redox energy in a proton gradient. The sequence is that of NADH-quinone oxidoreductase subunit I from Ralstonia nicotianae (strain ATCC BAA-1114 / GMI1000) (Ralstonia solanacearum).